A 223-amino-acid chain; its full sequence is MAKAVDESTYEQRVRALYDKQIRMEAREAGVIKKISKFNSNLLDLKEAVVRHHQKVGKVRKVKMLRCGELEKRANFMEELTQELEATKQRNLVMRDQIKQLNVLARQHRNEVMESIHTLSKTTGTYLNHEALPARVKGVTVLRNDNSDQLIPFDLKATDVEGLESLCQHLQGFNIDAFQWRQLVSLATEMSMDSHTTPTTPPKEAAEGKSIIEIDLTSPTSHI.

Residues 65-115 (LRCGELEKRANFMEELTQELEATKQRNLVMRDQIKQLNVLARQHRNEVMES) are a coiled coil.

The protein belongs to the SPC25 family. As to quaternary structure, component of the Ndc80 complex, which is composed of Ndc80, Nuf2 and Spc25.

It localises to the nucleus. Its subcellular location is the chromosome. The protein resides in the centromere. It is found in the kinetochore. Functionally, acts as a component of the essential kinetochore-associated Ndc80 complex, which is required for chromosome segregation and spindle checkpoint activity during meiosis and mitosis. Required for kinetochore integrity and the organization of stable microtubule binding sites in the outer plate of the kinetochore. Participates in SAC signaling that responds specifically to disruptions in spindle microtubule dynamics. The NDC80 complex synergistically enhances the affinity of the SKA1 complex for microtubules and may allow the NDC80 complex to track depolymerizing microtubules. The chain is Kinetochore protein Spc25 from Drosophila lutescens (Fruit fly).